Here is a 137-residue protein sequence, read N- to C-terminus: Small ribosomal subunit protein uS9c (137 aa).

Belongs to the universal ribosomal protein uS9 family.

Its subcellular location is the plastid. The protein localises to the chloroplast. The protein is Small ribosomal subunit protein uS9c (rps9) of Mesostigma viride (Green alga).